Consider the following 347-residue polypeptide: GMP reductase (347 aa).

Position 108-131 (108-131) interacts with NADP(+); that stretch reads ADFEKTVQILALNPALNFVCIDVA. K(+) contacts are provided by glycine 181 and glycine 183. Cysteine 186 serves as the catalytic Thioimidate intermediate. 216–239 serves as a coordination point for NADP(+); sequence IVSDGGCTMPGDVAKAFGGGADFV.

This sequence belongs to the IMPDH/GMPR family. GuaC type 1 subfamily. As to quaternary structure, homotetramer.

It carries out the reaction IMP + NH4(+) + NADP(+) = GMP + NADPH + 2 H(+). Catalyzes the irreversible NADPH-dependent deamination of GMP to IMP. It functions in the conversion of nucleobase, nucleoside and nucleotide derivatives of G to A nucleotides, and in maintaining the intracellular balance of A and G nucleotides. The chain is GMP reductase from Salmonella paratyphi A (strain ATCC 9150 / SARB42).